We begin with the raw amino-acid sequence, 642 residues long: Bifunctional protein glk (642 aa).

Positions 1 to 340 (MSTGAQSKAV…QLSNRSGGAS (340 aa)) are glucokinase. 23–28 (ADVGGT) contributes to the ATP binding site. Residues 341-417 (SAVFERIRQM…LKLATGLTGT (77 aa)) enclose the HTH rpiR-type domain. The interval 341–642 (SAVFERIRQM…SPAAKDVARD (302 aa)) is putative HTH-type transcriptional regulator. Positions 377-396 (IVDIARKADVSQPTVIRFCR) form a DNA-binding region, H-T-H motif. The region spanning 461–600 (AIEILNGARR…AVGVAIRRAS (140 aa)) is the SIS domain. A helical transmembrane segment spans residues 576 to 596 (SMISRILHLLMIDILAVGVAI).

The protein in the N-terminal section; belongs to the bacterial glucokinase family.

Its subcellular location is the membrane. It carries out the reaction D-glucose + ATP = D-glucose 6-phosphate + ADP + H(+). This is Bifunctional protein glk (glk) from Burkholderia orbicola (strain AU 1054).